Here is a 172-residue protein sequence, read N- to C-terminus: Light-harvesting complex-like protein OHP2, chloroplastic (172 aa).

Residues 1–43 (MSVASPIQCIRILNPSSSSSSSTASSSFRFSTTTKPCVFIIRC) constitute a chloroplast transit peptide. Residues 44 to 135 (SQTEGPLRRP…QPKNEISNGR (92 aa)) lie on the Stromal side of the membrane. Residues 45 to 90 (QTEGPLRRPSAPPTLREPQKPVPPSQPSSSPPPSPPPQKAVAVDGK) form a disordered region. Residues 64–82 (KPVPPSQPSSSPPPSPPPQ) are compositionally biased toward pro residues. A helical transmembrane segment spans residues 136 to 156 (WAMFGFAVGMLTEYATGSDLV). The Lumenal segment spans residues 157–172 (DQVKILLSNFGILDLE).

Belongs to the ELIP/psbS family. Component of a high molecular weight complex containing OHP1, OHP2 and HCF244, and PSII core proteins D1/D2, HCF136 and HCF173. Forms a trimeric complex with OHP1 and HCF244 that mutually stabilizes each subunit.

The protein localises to the plastid. It localises to the chloroplast thylakoid membrane. Its function is as follows. May play a photoprotective role within PSI in response to light stress. Forms a trimeric complex with OHP1 and HCF244 that is required to promote PSII core subunit assembly. The trimeric complex forms a transient PSII reaction center-like complex with PsbA, PsbD, PsbE, PsbF and PsbI subunits in thylakoids for early assembly of PSII as well as PSII repair. The trimeric complex is required for the recruitment of ribosomes to the psbA mRNA during PSII biogenesis and repair. Forms a heterodimer with OHP1 that binds chlorophylls and carotenoids, and that may function in the delivery of pigments to the PsbA subunit of PSII. The protein is Light-harvesting complex-like protein OHP2, chloroplastic of Arabidopsis thaliana (Mouse-ear cress).